A 468-amino-acid polypeptide reads, in one-letter code: Nuclear pore complex protein Nup50 (468 aa).

The segment covering 1–16 (MAKRNAEKELTDRNWD) has biased composition (basic and acidic residues). The disordered stretch occupies residues 1 to 26 (MAKRNAEKELTDRNWDQEDEAEEVGT). At A2 the chain carries N-acetylalanine. K8 is subject to N6-acetyllysine. At S52 the chain carries Phosphoserine. The stretch at 76–77 (FG) is repeat 1. Residues 76-304 (FGSGAGGKPL…FSPGNSSLFG (229 aa)) form a 5 X 2 AA repeats of F-G region. The residue at position 83 (K83) is an N6-acetyllysine. The stretch at 113–114 (FG) is repeat 2. Disordered stretches follow at residues 122–148 (TTLVDKVSNPKTNGDSQQPSSSGLASS) and 201–224 (HGNSGRNSESESNKVAAETQSPSL). K127 bears the N6-acetyllysine mark. Residues 137–148 (SQQPSSSGLASS) are compositionally biased toward low complexity. A binding to CDKN1B region spans residues 144-206 (GLASSKACVG…IEQQHGNSGR (63 aa)). S208 and S221 each carry phosphoserine. Repeat unit 3 spans residues 225 to 226 (FG). S234 carries the post-translational modification Phosphoserine. The tract at residues 238–269 (FHGNKTEDTPDKKMEVASEKKTDPSSLGATSA) is disordered. Over residues 241-260 (NKTEDTPDKKMEVASEKKTD) the composition is skewed to basic and acidic residues. Residues T246 and T259 each carry the phosphothreonine modification. A Phosphoserine modification is found at S270. Copy 4 of the repeat occupies 273–274 (FG). S296 bears the Phosphoserine mark. Repeat unit 5 spans residues 303-304 (FG). The segment covering 304–317 (GKDTTQSKPVSSPF) has biased composition (polar residues). Residues 304–345 (GKDTTQSKPVSSPFPTKPLEGQAEGDSGECKGGDEEENDEPP) are disordered. Positions 335–468 (GGDEEENDEP…HKILLEKKDA (134 aa)) constitute a RanBD1 domain. K353 is covalently cross-linked (Glycyl lysine isopeptide (Lys-Gly) (interchain with G-Cter in SUMO2)). K450 is modified (N6-acetyllysine).

Interacts with Importin alpha-2, Importin beta, Importin beta-2, NUP153, Ran binding protein 7, CDKN1B and itself. Does not interact with TPR. As to expression, ubiquitous. Highest levels in testis, peripheral blood leukocytes and fetal liver.

Its subcellular location is the nucleus. The protein resides in the nuclear pore complex. It localises to the nucleus membrane. In terms of biological role, component of the nuclear pore complex that has a direct role in nuclear protein import. Actively displaces NLSs from importin-alpha, and facilitates disassembly of the importin-alpha:beta-cargo complex and importin recycling. Interacts with regulatory proteins of cell cycle progression including CDKN1B. This interaction is required for correct intracellular transport and degradation of CDKN1B. The chain is Nuclear pore complex protein Nup50 (NUP50) from Homo sapiens (Human).